Reading from the N-terminus, the 86-residue chain is Small ribosomal subunit protein uS17 (86 aa).

This sequence belongs to the universal ribosomal protein uS17 family. In terms of assembly, part of the 30S ribosomal subunit.

Functionally, one of the primary rRNA binding proteins, it binds specifically to the 5'-end of 16S ribosomal RNA. The chain is Small ribosomal subunit protein uS17 from Desulfotalea psychrophila (strain LSv54 / DSM 12343).